The following is a 592-amino-acid chain: NADH-quinone oxidoreductase subunit C/D (592 aa).

Positions 1–183 are NADH dehydrogenase I subunit C; it reads MSAAQSPTAQ…DPYTLTVEGQ (183 aa). Residues 207-592 form an NADH dehydrogenase I subunit D region; that stretch reads DYMFLNLGPN…IDFVMADVDR (386 aa).

It in the N-terminal section; belongs to the complex I 30 kDa subunit family. This sequence in the C-terminal section; belongs to the complex I 49 kDa subunit family. As to quaternary structure, NDH-1 is composed of 13 different subunits. Subunits NuoB, CD, E, F, and G constitute the peripheral sector of the complex.

The protein resides in the cell inner membrane. The catalysed reaction is a quinone + NADH + 5 H(+)(in) = a quinol + NAD(+) + 4 H(+)(out). NDH-1 shuttles electrons from NADH, via FMN and iron-sulfur (Fe-S) centers, to quinones in the respiratory chain. The immediate electron acceptor for the enzyme in this species is believed to be ubiquinone. Couples the redox reaction to proton translocation (for every two electrons transferred, four hydrogen ions are translocated across the cytoplasmic membrane), and thus conserves the redox energy in a proton gradient. The protein is NADH-quinone oxidoreductase subunit C/D of Chromohalobacter salexigens (strain ATCC BAA-138 / DSM 3043 / CIP 106854 / NCIMB 13768 / 1H11).